The primary structure comprises 74 residues: Large ribosomal subunit protein eL38B (74 aa).

This sequence belongs to the eukaryotic ribosomal protein eL38 family. Component of the large ribosomal subunit (LSU). Mature yeast ribosomes consist of a small (40S) and a large (60S) subunit. The 40S small subunit contains 1 molecule of ribosomal RNA (18S rRNA) and at least 33 different proteins. The large 60S subunit contains 3 rRNA molecules (25S, 5.8S and 5S rRNA) and at least 46 different proteins.

Its subcellular location is the cytoplasm. Component of the ribosome, a large ribonucleoprotein complex responsible for the synthesis of proteins in the cell. The small ribosomal subunit (SSU) binds messenger RNAs (mRNAs) and translates the encoded message by selecting cognate aminoacyl-transfer RNA (tRNA) molecules. The large subunit (LSU) contains the ribosomal catalytic site termed the peptidyl transferase center (PTC), which catalyzes the formation of peptide bonds, thereby polymerizing the amino acids delivered by tRNAs into a polypeptide chain. The nascent polypeptides leave the ribosome through a tunnel in the LSU and interact with protein factors that function in enzymatic processing, targeting, and the membrane insertion of nascent chains at the exit of the ribosomal tunnel. This is Large ribosomal subunit protein eL38B (rpl3802) from Schizosaccharomyces pombe (strain 972 / ATCC 24843) (Fission yeast).